The sequence spans 1670 residues: Hemolymph clottable protein (1670 aa).

Positions 1 to 14 (MKALILLLLGACQA) are cleaved as a signal peptide. The interval 15–674 (LQPGLEYQYR…FANFVTTTIY (660 aa)) is vittelogenin. A Vitellogenin domain is found at 15–764 (LQPGLEYQYR…LKIDGQQRGL (750 aa)). The N-linked (GlcNAc...) asparagine glycan is linked to N106. A compositionally biased stretch (low complexity) spans 198 to 231 (SSYTTKTKSKTSSKTSSKTSSKTSSKTSKTGKTS). A disordered region spans residues 198-236 (SSYTTKTKSKTSSKTSSKTSSKTSSKTSKTGKTSPGQLA). Residues N319, N459, and N1301 are each glycosylated (N-linked (GlcNAc...) asparagine). The VWFD domain maps to 1390–1550 (VSCTIDETKV…SWASPGEGCA (161 aa)). Disulfide bonds link C1392/C1513 and C1414/C1549.

In terms of assembly, homodimer; disulfide-linked. Also exists as oligomers. In terms of processing, glycosylated. Contains mannose and N-acetylglucosamine. Substrate of transglutaminase. In terms of tissue distribution, widely expressed with highest levels in gill and heart. Not expressed in hemocytes.

It localises to the secreted. Its function is as follows. Forms stable clots in the presence of calcium. The protein is Hemolymph clottable protein of Penaeus monodon (Giant tiger prawn).